A 72-amino-acid polypeptide reads, in one-letter code: Alpha-elapitoxin-Djk2a (72 aa).

Disulfide bonds link C3-C21, C14-C42, C27-C31, C46-C57, and C58-C63.

The protein belongs to the three-finger toxin family. Long-chain subfamily. Type II alpha-neurotoxin sub-subfamily. In terms of tissue distribution, expressed by the venom gland.

It localises to the secreted. In terms of biological role, binds with high affinity to muscular (alpha-1/CHRNA1) and neuronal (alpha-7/CHRNA7) nicotinic acetylcholine receptor (nAChR) and inhibits acetylcholine from binding to the receptor, thereby impairing neuromuscular and neuronal transmission. This is Alpha-elapitoxin-Djk2a from Dendroaspis jamesoni kaimosae (Eastern Jameson's mamba).